The following is a 181-amino-acid chain: Protein Ves (181 aa).

This sequence belongs to the Ves family.

The polypeptide is Protein Ves (Cronobacter sakazakii (strain ATCC BAA-894) (Enterobacter sakazakii)).